The chain runs to 409 residues: Pentatricopeptide repeat-containing protein At5g09450, mitochondrial (409 aa).

The transit peptide at 1-38 (MATRSLFHSLRCRLTNNGVLGSNFIRNAESSRFSKSYN) directs the protein to the mitochondrion. PPR repeat units lie at residues 155–189 (TAETYTSLLHAYAASKQTERAEALFKRIIESDSLT), 191–225 (GAITYNEMMTLYMSVGQVEKVPEVIEVLKQKKVSP), 226–256 (DIFTYNLWLSSCAATFNIDELRKILEEMRHD), 262–296 (GWVRYIDLTSIYINSSRVTNAESTLPVEAEKSISQ), 298–332 (EWITYDFLMILHTGLGNKVMIDQIWKSLRNTNQIL), and 333–367 (SSRSYICVLSSYLMLGHLREAEEIIHQWKESKTTE).

This sequence belongs to the PPR family. P subfamily.

The protein resides in the mitochondrion. The sequence is that of Pentatricopeptide repeat-containing protein At5g09450, mitochondrial from Arabidopsis thaliana (Mouse-ear cress).